A 1042-amino-acid polypeptide reads, in one-letter code: Isoleucine--tRNA ligase (1042 aa).

A 'HIGH' region motif is present at residues 48–58; that stretch reads PFATGLPHFGH. Residues 594–598 carry the 'KMSKS' region motif; the sequence is KMSKS. Lys597 provides a ligand contact to ATP.

This sequence belongs to the class-I aminoacyl-tRNA synthetase family. IleS type 2 subfamily. In terms of assembly, monomer. It depends on Zn(2+) as a cofactor.

The protein localises to the cytoplasm. The enzyme catalyses tRNA(Ile) + L-isoleucine + ATP = L-isoleucyl-tRNA(Ile) + AMP + diphosphate. Catalyzes the attachment of isoleucine to tRNA(Ile). As IleRS can inadvertently accommodate and process structurally similar amino acids such as valine, to avoid such errors it has two additional distinct tRNA(Ile)-dependent editing activities. One activity is designated as 'pretransfer' editing and involves the hydrolysis of activated Val-AMP. The other activity is designated 'posttransfer' editing and involves deacylation of mischarged Val-tRNA(Ile). In Borrelia garinii subsp. bavariensis (strain ATCC BAA-2496 / DSM 23469 / PBi) (Borreliella bavariensis), this protein is Isoleucine--tRNA ligase.